Here is a 254-residue protein sequence, read N- to C-terminus: Type III pantothenate kinase (254 aa).

Position 7–14 (7–14 (DVGNTRLK)) interacts with ATP. Substrate contacts are provided by residues Tyr96 and 103–106 (GSDR). Asp105 (proton acceptor) is an active-site residue. ATP is bound at residue Thr133. Thr183 contacts substrate.

It belongs to the type III pantothenate kinase family. Homodimer. It depends on NH4(+) as a cofactor. Requires K(+) as cofactor.

It is found in the cytoplasm. The enzyme catalyses (R)-pantothenate + ATP = (R)-4'-phosphopantothenate + ADP + H(+). It functions in the pathway cofactor biosynthesis; coenzyme A biosynthesis; CoA from (R)-pantothenate: step 1/5. In terms of biological role, catalyzes the phosphorylation of pantothenate (Pan), the first step in CoA biosynthesis. The polypeptide is Type III pantothenate kinase (Paracidovorax citrulli (strain AAC00-1) (Acidovorax citrulli)).